A 252-amino-acid polypeptide reads, in one-letter code: 3-deoxy-manno-octulosonate cytidylyltransferase (252 aa).

Belongs to the KdsB family.

Its subcellular location is the cytoplasm. The enzyme catalyses 3-deoxy-alpha-D-manno-oct-2-ulosonate + CTP = CMP-3-deoxy-beta-D-manno-octulosonate + diphosphate. The protein operates within nucleotide-sugar biosynthesis; CMP-3-deoxy-D-manno-octulosonate biosynthesis; CMP-3-deoxy-D-manno-octulosonate from 3-deoxy-D-manno-octulosonate and CTP: step 1/1. It participates in bacterial outer membrane biogenesis; lipopolysaccharide biosynthesis. In terms of biological role, activates KDO (a required 8-carbon sugar) for incorporation into bacterial lipopolysaccharide in Gram-negative bacteria. In Rhodospirillum rubrum (strain ATCC 11170 / ATH 1.1.1 / DSM 467 / LMG 4362 / NCIMB 8255 / S1), this protein is 3-deoxy-manno-octulosonate cytidylyltransferase.